Reading from the N-terminus, the 1509-residue chain is MSKFLENLTPIDLNSDDRPKDIAALQLKVASPEKVLSWSYGEVKKPETINYRTLKPERDGLFCAKIFGPIRDYECLCGKYKKMRYKGVVCEKCGVEVTSSKVRRNRMGHIDLIAPVAHIWYVSSLPSRIGTLLGVKMKDLERVLYYEAYIVKTPGEASYDNEGLNPVQKYDVLNEEQYQQISSRFGDTGLDARMGGEIVQELLADLDLVDMFAQLKEDIQATKSEAKRKTIVKRLKVIEAFLHSGNRPEWMMLTQLPVLPPDLRPLVSLDGGKFAVSDVNDLYRRVINRNQRLKRLVELDAPEIIVRNEKRMLQEAVDALFDNGRRGNAVKGANKRPLKSLSEVIKGKQGRFRQNLLGKRVDFSGRSVIVVGPDLRMDQCGLPKKMAIELFKPHLMAKLEEKGYATTLKQAKKMIEQQVNEVWECLEEVVENYPVLLNRAPTLHKLSIQAFHPRLIEGKAIQLHPLVCSAFNADFDGDQMAVHVPLSDEAIAEAKVLMLASMNILLPASGKAIAVPSQDMILGLYYLTLEKNDVKGQHKLFANVEEVEIAFEQQALDLNARIRTVLDGRIATSTAGRLILKSIIPDYVPEKYWNKVLKKKDIGALVDYIYKIGGVSETAGFLDNLKDMGFKYATKVGVSISVDDIKIPEMKEGRVQTAKEQVKEIQRQYAAGLLTDQERYNKIIDIWTDANNSIAEALMDLIRKDKDGFNSVHMMADSGARGSAAQIRQLSGMRGLMAKSDGSIIETPITSNFREGLNVLEYFISTHGARKGLADTALKTANAGYLTRKLIDVAQNVKVSMTDCGTHEGVEVSDIVVGNEMIEPLADRIYGRVLAEDIIDPITSEVLVSEGTMIDEETATRVQEAGVRSVVMRAPSSCKAPKGICAKCYGLNMADNKMVKRGEAVGVIAAQSIGEPGTQLTLRTFHTGGTATAGKEERSVVATKEGFVRYYNLSVYRNTEGKLIVANRRNAGVLLVEPKIKAVNKGKVSIVVTHDEIVISVENNGDDEVRYNLRKSDVAKSNELAGVAGKIEGKLFLPLKDGDMVEEGDSIVEVIKEGWSIPSRIPFASELKVEDGAPVTQEVLSEAKGTVKFFLLKGDYLEAHDGVKSGDKVEEKGLFAVVVDDNNREAGRHYISRGSVVHVDNNAKVERGATLSAPEKTTQVVIAEWDPYSEPIIAEQKGTLKFEDIIPGVTVVEQFDEVTGDTRLELNEYIPAAYKPAITLATESGELIRYQLDPKTILFVKDGEEVNIADILAKTPKAAIKSKDITGGLPRVSELFEARRPKDIALIAQIDGVVSFGKPLRGKERLIISGDNGQITEQFIDKNKVALVHTGEYVHAGEKLTDGIVSSHDILAALGEKALYDYIVSEVQMVYRRQGVNISDKHIEIVTSQMMRQVKVVESGDSNFIAGDIISRRKFQEENQRVIALGGEPAIAEPMLVGITRAAVGADSIISAASFQDTTKVLTSASIAGTVDMLEDLKENVVIGRLIPVGTGMIDSDEIKFSAAE.

Zn(2+) contacts are provided by C75, C77, C90, and C93. Residues D474, D476, and D478 each coordinate Mg(2+). Zn(2+) is bound by residues C804, C878, C885, and C888.

Belongs to the RNA polymerase beta' chain family. As to quaternary structure, the RNAP catalytic core consists of 2 alpha, 1 beta, 1 beta' and 1 omega subunit. When a sigma factor is associated with the core the holoenzyme is formed, which can initiate transcription. Requires Mg(2+) as cofactor. Zn(2+) serves as cofactor.

It catalyses the reaction RNA(n) + a ribonucleoside 5'-triphosphate = RNA(n+1) + diphosphate. Its function is as follows. DNA-dependent RNA polymerase catalyzes the transcription of DNA into RNA using the four ribonucleoside triphosphates as substrates. This is DNA-directed RNA polymerase subunit beta' from Sulfurovum sp. (strain NBC37-1).